The primary structure comprises 429 residues: MKERTIQPVNNGLNGNITIPGDKSISHRAVMFGAIAEGKTTIKGFLPGADCLSTISCFKEMGVDIVQNGDEVTVVGKGLEGLQEPKAVLDVGNSGTTIRLMSGILANTPFFSCVQGDASIAKRPMKRVTNPLKQMGANIDGREEGTFTPLTIRGGDLKAIEYTSPVASAQVKSAILLAGLRAEGVTAVTEPHISRDHTERMLEAFGVKVTREGKTVKLAGGQKLTATDVQVPGDVSSAAFFLVAGAIIPNSKLVLQNVGMNPTRTGIIDVLEKMDATFTVEPINEGASEPAANITIETSSLKGIEIGGDIIPRLIDEIPVIALAATQAEGITVIKDAHELKVKETNRIDTVVAELTKLGARIEATDDGMIIYGKSALKGNTVNSYGDHRIGMMLAIAGCLAEGKTTIEDAEAVGVSYPTFFEELQRLTK.

Residues Lys23, Ser24, and Arg28 each contribute to the 3-phosphoshikimate site. Lys23 serves as a coordination point for phosphoenolpyruvate. Positions 95 and 123 each coordinate phosphoenolpyruvate. The 3-phosphoshikimate site is built by Ser168, Gln170, Asp316, and Lys343. Gln170 provides a ligand contact to phosphoenolpyruvate. The active-site Proton acceptor is Asp316. Phosphoenolpyruvate is bound by residues Arg347 and Arg389.

This sequence belongs to the EPSP synthase family. As to quaternary structure, monomer.

The protein localises to the cytoplasm. It catalyses the reaction 3-phosphoshikimate + phosphoenolpyruvate = 5-O-(1-carboxyvinyl)-3-phosphoshikimate + phosphate. Its pathway is metabolic intermediate biosynthesis; chorismate biosynthesis; chorismate from D-erythrose 4-phosphate and phosphoenolpyruvate: step 6/7. Catalyzes the transfer of the enolpyruvyl moiety of phosphoenolpyruvate (PEP) to the 5-hydroxyl of shikimate-3-phosphate (S3P) to produce enolpyruvyl shikimate-3-phosphate and inorganic phosphate. The chain is 3-phosphoshikimate 1-carboxyvinyltransferase from Bacillus cereus (strain AH187).